A 159-amino-acid chain; its full sequence is Phosphopantetheine adenylyltransferase (159 aa).

Substrate is bound at residue threonine 10. Residues 10 to 11 (TF) and histidine 18 each bind ATP. 3 residues coordinate substrate: lysine 42, methionine 74, and arginine 88. Residues 89–91 (GLR), glutamate 99, and 124–130 (WSFISSS) each bind ATP.

Belongs to the bacterial CoaD family. In terms of assembly, homohexamer. Requires Mg(2+) as cofactor.

It is found in the cytoplasm. The enzyme catalyses (R)-4'-phosphopantetheine + ATP + H(+) = 3'-dephospho-CoA + diphosphate. It participates in cofactor biosynthesis; coenzyme A biosynthesis; CoA from (R)-pantothenate: step 4/5. Its function is as follows. Reversibly transfers an adenylyl group from ATP to 4'-phosphopantetheine, yielding dephospho-CoA (dPCoA) and pyrophosphate. This is Phosphopantetheine adenylyltransferase from Escherichia coli (strain UTI89 / UPEC).